The sequence spans 171 residues: MDYRIRTSRDEDAALLPAIERSAGESFRLLPELAWIADAGVAGVDFHRRLIERGSHWLAEDADGQPVGFLAAERCADELHIAELSIAQAHQQQGLGRRLLERAVTYAHASHCRALTLTTFCDVPWNAPFYARLGFQRLTWQEAGERLRAILGHEQEIGFAADSRCAMRLVL.

Positions 3-162 (YRIRTSRDED…HEQEIGFAAD (160 aa)) constitute an N-acetyltransferase domain. CoA-binding positions include 84 to 86 (LSI) and 128 to 130 (PFY).

Functionally, catalyzes the transfer of an acetyl group from acetyl coenzyme A (AcCoA) to an acceptor substrate and releases both CoA and the acetylated product. It can use a variety of substrates including spermidine, spermine and N(8)-acetylspermidine, 7-aminocephalosporanic acid, colistin and thiamine. The protein is Acetyltransferase PA2271 of Pseudomonas aeruginosa (strain ATCC 15692 / DSM 22644 / CIP 104116 / JCM 14847 / LMG 12228 / 1C / PRS 101 / PAO1).